The chain runs to 69 residues: Large ribosomal subunit protein uL29 (69 aa).

It belongs to the universal ribosomal protein uL29 family.

The sequence is that of Large ribosomal subunit protein uL29 from Staphylococcus haemolyticus (strain JCSC1435).